The sequence spans 349 residues: Nicotinate-nucleotide--dimethylbenzimidazole phosphoribosyltransferase (349 aa).

Glutamate 315 serves as the catalytic Proton acceptor.

It belongs to the CobT family.

It carries out the reaction 5,6-dimethylbenzimidazole + nicotinate beta-D-ribonucleotide = alpha-ribazole 5'-phosphate + nicotinate + H(+). It participates in nucleoside biosynthesis; alpha-ribazole biosynthesis; alpha-ribazole from 5,6-dimethylbenzimidazole: step 1/2. In terms of biological role, catalyzes the synthesis of alpha-ribazole-5'-phosphate from nicotinate mononucleotide (NAMN) and 5,6-dimethylbenzimidazole (DMB). The protein is Nicotinate-nucleotide--dimethylbenzimidazole phosphoribosyltransferase of Variovorax paradoxus (strain S110).